A 460-amino-acid chain; its full sequence is UDP-N-acetylmuramate--L-alanine ligase (460 aa).

ATP is bound at residue 119–125 (GSHGKTT).

It belongs to the MurCDEF family.

The protein localises to the cytoplasm. It carries out the reaction UDP-N-acetyl-alpha-D-muramate + L-alanine + ATP = UDP-N-acetyl-alpha-D-muramoyl-L-alanine + ADP + phosphate + H(+). It participates in cell wall biogenesis; peptidoglycan biosynthesis. In terms of biological role, cell wall formation. This chain is UDP-N-acetylmuramate--L-alanine ligase, found in Alkaliphilus metalliredigens (strain QYMF).